A 370-amino-acid polypeptide reads, in one-letter code: Phosphoribosylformylglycinamidine cyclo-ligase (370 aa).

Belongs to the AIR synthase family.

It is found in the cytoplasm. The enzyme catalyses 2-formamido-N(1)-(5-O-phospho-beta-D-ribosyl)acetamidine + ATP = 5-amino-1-(5-phospho-beta-D-ribosyl)imidazole + ADP + phosphate + H(+). Its pathway is purine metabolism; IMP biosynthesis via de novo pathway; 5-amino-1-(5-phospho-D-ribosyl)imidazole from N(2)-formyl-N(1)-(5-phospho-D-ribosyl)glycinamide: step 2/2. This Rhodospirillum rubrum (strain ATCC 11170 / ATH 1.1.1 / DSM 467 / LMG 4362 / NCIMB 8255 / S1) protein is Phosphoribosylformylglycinamidine cyclo-ligase.